Reading from the N-terminus, the 296-residue chain is Probable endonuclease 4 (296 aa).

Residues H68, H108, E145, D179, H182, H216, D229, H231, and E261 each contribute to the Zn(2+) site.

This sequence belongs to the AP endonuclease 2 family. It depends on Zn(2+) as a cofactor.

It catalyses the reaction Endonucleolytic cleavage to 5'-phosphooligonucleotide end-products.. Functionally, endonuclease IV plays a role in DNA repair. It cleaves phosphodiester bonds at apurinic or apyrimidinic (AP) sites, generating a 3'-hydroxyl group and a 5'-terminal sugar phosphate. This chain is Probable endonuclease 4, found in Geobacter sulfurreducens (strain ATCC 51573 / DSM 12127 / PCA).